The chain runs to 396 residues: S-adenosylmethionine synthase (396 aa).

Histidine 15 serves as a coordination point for ATP. Residue aspartate 17 coordinates Mg(2+). Glutamate 43 contributes to the K(+) binding site. Residues glutamate 56 and glutamine 99 each contribute to the L-methionine site. The interval 99-109 (QSPDIALGVNR) is flexible loop. Residues 175-177 (DGK), 241-242 (RF), aspartate 250, 256-257 (RK), alanine 273, and lysine 277 each bind ATP. Aspartate 250 provides a ligand contact to L-methionine. L-methionine is bound at residue lysine 281.

The protein belongs to the AdoMet synthase family. As to quaternary structure, homotetramer; dimer of dimers. Requires Mg(2+) as cofactor. K(+) serves as cofactor.

It localises to the cytoplasm. The catalysed reaction is L-methionine + ATP + H2O = S-adenosyl-L-methionine + phosphate + diphosphate. It functions in the pathway amino-acid biosynthesis; S-adenosyl-L-methionine biosynthesis; S-adenosyl-L-methionine from L-methionine: step 1/1. Catalyzes the formation of S-adenosylmethionine (AdoMet) from methionine and ATP. The overall synthetic reaction is composed of two sequential steps, AdoMet formation and the subsequent tripolyphosphate hydrolysis which occurs prior to release of AdoMet from the enzyme. This is S-adenosylmethionine synthase from Carboxydothermus hydrogenoformans (strain ATCC BAA-161 / DSM 6008 / Z-2901).